The chain runs to 272 residues: Bifunctional protein FolD (272 aa).

NADP(+) contacts are provided by residues 155–157 (GRS), S182, and I223.

This sequence belongs to the tetrahydrofolate dehydrogenase/cyclohydrolase family. In terms of assembly, homodimer.

The enzyme catalyses (6R)-5,10-methylene-5,6,7,8-tetrahydrofolate + NADP(+) = (6R)-5,10-methenyltetrahydrofolate + NADPH. The catalysed reaction is (6R)-5,10-methenyltetrahydrofolate + H2O = (6R)-10-formyltetrahydrofolate + H(+). It participates in one-carbon metabolism; tetrahydrofolate interconversion. Its function is as follows. Catalyzes the oxidation of 5,10-methylenetetrahydrofolate to 5,10-methenyltetrahydrofolate and then the hydrolysis of 5,10-methenyltetrahydrofolate to 10-formyltetrahydrofolate. The chain is Bifunctional protein FolD from Fervidobacterium nodosum (strain ATCC 35602 / DSM 5306 / Rt17-B1).